Consider the following 312-residue polypeptide: tRNA pseudouridine synthase B (312 aa).

Catalysis depends on Asp37, which acts as the Nucleophile.

The protein belongs to the pseudouridine synthase TruB family. Type 1 subfamily.

It catalyses the reaction uridine(55) in tRNA = pseudouridine(55) in tRNA. Functionally, responsible for synthesis of pseudouridine from uracil-55 in the psi GC loop of transfer RNAs. This chain is tRNA pseudouridine synthase B, found in Deinococcus geothermalis (strain DSM 11300 / CIP 105573 / AG-3a).